A 1709-amino-acid chain; its full sequence is Hybrid signal transduction histidine kinase L (1709 aa).

Disordered stretches follow at residues 52-192 (SNNN…SPPH), 206-276 (FFSG…NSSD), 413-535 (TSNS…NNSC), and 554-615 (QQQQ…IFNN). Low complexity predominate over residues 53 to 87 (NNNNNNNNNNNNNNNNNNNNNNNNNNNNNNNNNNN). Positions 88–100 (NEEKSNNETEKTL) are enriched in basic and acidic residues. Residues 106 to 148 (TTTTTTTNNNNNNNNNNNNNNNNNNNNNNNNNNNNNNNNNNTN) show a composition bias toward low complexity. Positions 149–170 (SSNDIYMNSPSSTLSSPGNAGN) are enriched in polar residues. Low complexity-rich tracts occupy residues 413–466 (TSNS…TPNS), 486–535 (NNSP…NNSC), and 554–576 (QQQQ…PTTS). Residues 585 to 610 (LTINTSFKTSPMSSPKSFNKPSQSPQ) are compositionally biased toward polar residues. Residues 700-771 (ATRKMVTCIE…ATLTDKKTWN (72 aa)) enclose the PAS domain. In terms of domain architecture, PAC spans 770–822 (WNGFIRTRHNNNTLIYFEASISPVLDQFQQILYYNCTKRDVTQKRIDEESKTL). In terms of domain architecture, Histidine kinase spans 837-1059 (MMSHDIRTPM…TFTCILKFKK (223 aa)). Position 840 is a phosphohistidine; by autocatalysis (histidine 840). Disordered stretches follow at residues 1068-1112 (LLPA…HQQH) and 1137-1298 (QHQL…PTSP). Composition is skewed to low complexity over residues 1075–1112 (LQQQ…HQQH), 1137–1153 (QHQL…LQQQ), and 1176–1194 (NQHI…QQQQ). The span at 1204 to 1221 (HNSHGHNHHGSHHNHNHQ) shows a compositional bias: basic residues. Polar residues-rich tracts occupy residues 1244–1257 (NEQQ…NSFS) and 1275–1298 (NISQ…PTSP). Response regulatory domains are found at residues 1312 to 1492 (KMLF…MMYL) and 1570 to 1692 (KVLV…KKYG). The residue at position 1366 (aspartate 1366) is a 4-aspartylphosphate. 2 stretches are compositionally biased toward low complexity: residues 1390–1412 (QHLQ…SELQ) and 1420–1440 (KNSS…SSGG). The disordered stretch occupies residues 1390-1440 (QHLQQQQEQEQQQQQEQQQSELQKQPDVENKNSSQNNDNNNNNNKSNSSGG). Aspartate 1622 is modified (4-aspartylphosphate).

Activation probably requires transfer of a phosphate group between a histidine in the kinase core (transmitter) domain and an aspartate of the receiver domain.

The catalysed reaction is ATP + protein L-histidine = ADP + protein N-phospho-L-histidine.. Functionally, acts as a receptor histidine kinase for a signal transduction pathway. This protein undergoes an ATP-dependent autophosphorylation at a conserved histidine residue in the kinase core, and a phosphoryl group is then transferred to a conserved aspartate residue in the receiver domain. In Dictyostelium discoideum (Social amoeba), this protein is Hybrid signal transduction histidine kinase L (dhkL).